A 682-amino-acid polypeptide reads, in one-letter code: MTSPASGVPEPADPKARLAELVERLAAADAAYYRDDAPIMDDAAYDALRREAESLRAAHPDLAAALDQVGAAPSGAFGKVRHRLPMLSLDNVFEPADFVEFCASIRRFLGLGAAPLAFVAEPKIDGLSISLTYENRRFVRGATRGDGTEGEDVTENLRTLRELPATLPDDAPDFIEIRGEVYMTKTDFITLNQGQARQFANPRNAAAGSLRQLDPAVTASRRLSLFAYARGAASQAVGETHWDYLAILRRWGFPVNPLAERVSEAGAEPFQRSIGERRAGLDYDIDGVVYKIDDLALQERLGFAGRAPRWAVAWKFPAERALTTLLGIDIQVGRTGALTPRARLDPVNVGGVLVSHATLHNEDEIARKDVRIGDTVELQRAGDVIPQILRALPERRPADSVPFVFPDHCPVCGALAIRPAGEVVRRCTGGLSCPAQVVERLIHFCSRLAFDIEGMGEKTVQEFHGLGWLESPADIFTLRDREAAIAALEGWGEVSARKLIAAIDARRRISLARFIYALGIRRIGEQNAKLLARHYSSYAVWRRQMEEAGVIGSDARLELGSISGIGPSIAEELAGFFAEPHNRDLLDRLVPMLTIEDEVAAAGGALAGKTIVFTGTLESLTRPEAKARAEALGARVTESVSKKTDFVVVGADAGSKAAKAASLGVTVLSEAEFRSLAGLPPG.

NAD(+)-binding positions include 42–46 (DAAYD), 88–89 (SL), and glutamate 121. Residue lysine 123 is the N6-AMP-lysine intermediate of the active site. The NAD(+) site is built by arginine 144, glutamate 180, lysine 291, and lysine 315. Zn(2+) is bound by residues cysteine 409, cysteine 412, cysteine 427, and cysteine 433. The 82-residue stretch at 601–682 (AAGGALAGKT…FRSLAGLPPG (82 aa)) folds into the BRCT domain.

It belongs to the NAD-dependent DNA ligase family. LigA subfamily. Mg(2+) is required as a cofactor. Mn(2+) serves as cofactor.

The catalysed reaction is NAD(+) + (deoxyribonucleotide)n-3'-hydroxyl + 5'-phospho-(deoxyribonucleotide)m = (deoxyribonucleotide)n+m + AMP + beta-nicotinamide D-nucleotide.. In terms of biological role, DNA ligase that catalyzes the formation of phosphodiester linkages between 5'-phosphoryl and 3'-hydroxyl groups in double-stranded DNA using NAD as a coenzyme and as the energy source for the reaction. It is essential for DNA replication and repair of damaged DNA. This is DNA ligase from Acidiphilium cryptum (strain JF-5).